The sequence spans 561 residues: TBC1 domain family member 24 (561 aa).

A 1,2-diacyl-sn-glycero-3-phospho-(1D-myo-inositol) is bound by residues K36 and R40. Residues A45 to G236 enclose the Rab-GAP TBC domain. A 1,2-diacyl-sn-glycero-3-phospho-(1D-myo-inositol)-binding positions include K238, R242, and R293–R297. Residues E343–Q556 enclose the TLDc domain. A phosphoserine mark is found at S475 and S482.

Interacts with ARF6. In terms of tissue distribution, expressed in brain, particularly at the level of the cortex and the hippocampus. Expressed in the inner ear in spiral ganglion cells, a collection of neurons critical for hearing and balance.

It is found in the cell membrane. The protein resides in the cytoplasm. The protein localises to the cytoplasmic vesicle membrane. Its subcellular location is the presynapse. Its function is as follows. May act as a GTPase-activating protein for Rab family protein(s). Involved in neuronal projections development, probably through a negative modulation of ARF6 function. Involved in the regulation of synaptic vesicle trafficking. This Mus musculus (Mouse) protein is TBC1 domain family member 24 (Tbc1d24).